Reading from the N-terminus, the 178-residue chain is Fatty-acid and retinol-binding protein 1 (178 aa).

Residues 1-16 (MYHRLILLALVGTTMA) form the signal peptide. 2 coiled-coil regions span residues 67-89 (DAAL…ELRN) and 130-153 (KQAA…ELKV).

The protein belongs to the fatty-acid and retinol-binding protein (FARBP) family. Post-translationally, not glycosylated.

It localises to the secreted. Binds retinol and different fatty acids. The sequence is that of Fatty-acid and retinol-binding protein 1 from Brugia pahangi (Filarial nematode worm).